A 153-amino-acid chain; its full sequence is Transcription antitermination protein NusB (153 aa).

Belongs to the NusB family.

In terms of biological role, involved in transcription antitermination. Required for transcription of ribosomal RNA (rRNA) genes. Binds specifically to the boxA antiterminator sequence of the ribosomal RNA (rrn) operons. In Nitratidesulfovibrio vulgaris (strain ATCC 29579 / DSM 644 / CCUG 34227 / NCIMB 8303 / VKM B-1760 / Hildenborough) (Desulfovibrio vulgaris), this protein is Transcription antitermination protein NusB.